Here is a 104-residue protein sequence, read N- to C-terminus: Transcription elongation factor A protein-like 9 (104 aa).

Positions 1–27 (MKSCQKMEGKPENESEPKHEEEPKPEE) are enriched in basic and acidic residues. Residues 1-44 (MKSCQKMEGKPENESEPKHEEEPKPEEKPEEEEKLEEEAKAKGT) form a disordered region.

It belongs to the TFS-II family. TFA subfamily.

The protein localises to the nucleus. In terms of biological role, may be involved in transcriptional regulation. This Homo sapiens (Human) protein is Transcription elongation factor A protein-like 9.